Reading from the N-terminus, the 310-residue chain is Beta-carotene 3-hydroxylase 1, chloroplastic (310 aa).

Residues 1–51 (MAAGLSTAVTFKPLHRSFSSSSTDFRLRLPKSLSGFSPSLRFKRFSVCYVV) constitute a chloroplast transit peptide. A run of 2 helical transmembrane segments spans residues 98-118 (YLIAAMLSSFGITSMAVMAVY) and 132-152 (MLEMFGTFALSVGAAVGMEFW). In terms of domain architecture, Fatty acid hydroxylase spans 145-272 (AAVGMEFWAR…KFNGVPYGLF (128 aa)). Residues 157–162 (HRALWH) carry the Histidine box-1 motif. A Histidine box-2 motif is present at residues 169-173 (HESHH). The next 2 helical transmembrane spans lie at 183 to 203 (NDVFAIVNAGPAIGLLSYGFF) and 208 to 228 (VPGLCFGAGLGITVFGIAYMF). The short motif at 230 to 235 (HDGLVH) is the Histidine box-3 element. The Histidine box-4 signature appears at 256-260 (HQLHH).

It belongs to the sterol desaturase family. As to quaternary structure, homodimer. Expressed in leaves, flowers, stems, roots and siliques.

It localises to the plastid. The protein localises to the chloroplast membrane. The catalysed reaction is all-trans-beta-carotene + 4 reduced [2Fe-2S]-[ferredoxin] + 2 O2 + 4 H(+) = all-trans-zeaxanthin + 4 oxidized [2Fe-2S]-[ferredoxin] + 2 H2O. Its function is as follows. Nonheme diiron monooxygenase involved in the biosynthesis of xanthophylls. Specific for beta-ring hydroxylations of beta-carotene. Also has a low activity toward the beta- and epsilon-rings of alpha-carotene. No activity with acyclic carotenoids such as lycopene and neurosporene. Uses ferredoxin as an electron donor. In Arabidopsis thaliana (Mouse-ear cress), this protein is Beta-carotene 3-hydroxylase 1, chloroplastic (BETA-OHASE 1).